The following is a 353-amino-acid chain: Photosystem II protein D1 (353 aa).

N-acetylthreonine is present on threonine 2. A Phosphothreonine modification is found at threonine 2. 3 consecutive transmembrane segments (helical) span residues 29–46 (YIGW…TATS), 118–133 (HFLL…EWEL), and 142–156 (WIAV…AATA). Histidine 118 provides a ligand contact to chlorophyll a. Tyrosine 126 contacts pheophytin a. Positions 170 and 189 each coordinate [CaMn4O5] cluster. A helical transmembrane segment spans residues 197–218 (FHMLGVAGVFGGSLFSAMHGSL). Position 198 (histidine 198) interacts with chlorophyll a. A quinone contacts are provided by residues histidine 215 and 264-265 (SF). Histidine 215 is a binding site for Fe cation. Fe cation is bound at residue histidine 272. Residues 274–288 (FLAAWPVVGIWFTAL) traverse the membrane as a helical segment. Histidine 332, glutamate 333, aspartate 342, and alanine 344 together coordinate [CaMn4O5] cluster. Residues 345-353 (ALEVPSLNG) constitute a propeptide that is removed on maturation.

It belongs to the reaction center PufL/M/PsbA/D family. PSII is composed of 1 copy each of membrane proteins PsbA, PsbB, PsbC, PsbD, PsbE, PsbF, PsbH, PsbI, PsbJ, PsbK, PsbL, PsbM, PsbT, PsbX, PsbY, PsbZ, Psb30/Ycf12, at least 3 peripheral proteins of the oxygen-evolving complex and a large number of cofactors. It forms dimeric complexes. The D1/D2 heterodimer binds P680, chlorophylls that are the primary electron donor of PSII, and subsequent electron acceptors. It shares a non-heme iron and each subunit binds pheophytin, quinone, additional chlorophylls, carotenoids and lipids. D1 provides most of the ligands for the Mn4-Ca-O5 cluster of the oxygen-evolving complex (OEC). There is also a Cl(-1) ion associated with D1 and D2, which is required for oxygen evolution. The PSII complex binds additional chlorophylls, carotenoids and specific lipids. is required as a cofactor. Tyr-161 forms a radical intermediate that is referred to as redox-active TyrZ, YZ or Y-Z. Post-translationally, C-terminally processed by CTPA; processing is essential to allow assembly of the oxygen-evolving complex and thus photosynthetic growth.

It localises to the plastid. It is found in the chloroplast thylakoid membrane. The catalysed reaction is 2 a plastoquinone + 4 hnu + 2 H2O = 2 a plastoquinol + O2. Photosystem II (PSII) is a light-driven water:plastoquinone oxidoreductase that uses light energy to abstract electrons from H(2)O, generating O(2) and a proton gradient subsequently used for ATP formation. It consists of a core antenna complex that captures photons, and an electron transfer chain that converts photonic excitation into a charge separation. The D1/D2 (PsbA/PsbD) reaction center heterodimer binds P680, the primary electron donor of PSII as well as several subsequent electron acceptors. This chain is Photosystem II protein D1, found in Lolium perenne (Perennial ryegrass).